The primary structure comprises 65 residues: Sperm protamine P1 (65 aa).

Residues 1-65 (MARYRHSRSR…RYSRRRRRRY (65 aa)) form a disordered region.

It belongs to the protamine P1 family. As to expression, testis.

The protein localises to the nucleus. Its subcellular location is the chromosome. Protamines substitute for histones in the chromatin of sperm during the haploid phase of spermatogenesis. They compact sperm DNA into a highly condensed, stable and inactive complex. This chain is Sperm protamine P1 (PRM1), found in Lagorchestes hirsutus (Rufous hare-wallaby).